The chain runs to 468 residues: UDP-N-acetylmuramoyl-L-alanine--L-glutamate ligase (468 aa).

122–128 (GTKGKST) provides a ligand contact to ATP.

Belongs to the MurCDEF family. MurD2 subfamily.

It is found in the cytoplasm. The enzyme catalyses UDP-N-acetyl-alpha-D-muramoyl-L-alanine + L-glutamate + ATP = UDP-N-acetyl-alpha-D-muramoyl-L-alanyl-L-glutamate + ADP + phosphate + H(+). It participates in cell wall biogenesis; peptidoglycan biosynthesis. Its function is as follows. Cell wall formation. Catalyzes the addition of L-glutamate to the nucleotide precursor UDP-N-acetylmuramoyl-L-alanine. Has weak activity with D-glutamate. The chain is UDP-N-acetylmuramoyl-L-alanine--L-glutamate ligase from Xanthomonas oryzae pv. oryzae (strain MAFF 311018).